A 329-amino-acid chain; its full sequence is Isopenicillin N synthase (329 aa).

R87, Y91, S183, and Y189 together coordinate isopenicillin N. Positions 87, 91, 183, 189, 212, and 214 each coordinate N-[(5S)-5-amino-5-carboxypentanoyl]-L-cysteinyl-D-valine. The region spanning 180 to 286 is the Fe2OG dioxygenase domain; that stretch reads TLSSVSLIRY…RLSLPFFLNA (107 aa). Fe(2+)-binding residues include H212, D214, and H268. Residue R277 coordinates 2-oxoglutarate. S279 is an isopenicillin N binding site. An N-[(5S)-5-amino-5-carboxypentanoyl]-L-cysteinyl-D-valine-binding site is contributed by S279.

The protein belongs to the iron/ascorbate-dependent oxidoreductase family. Requires Fe cation as cofactor. The cofactor is L-ascorbate.

It catalyses the reaction N-[(5S)-5-amino-5-carboxypentanoyl]-L-cysteinyl-D-valine + O2 = isopenicillin N + 2 H2O. The protein operates within antibiotic biosynthesis; penicillin G biosynthesis; penicillin G from L-alpha-aminoadipate and L-cysteine and L-valine: step 2/3. Functionally, removes, in the presence of oxygen, 4 hydrogen atoms from delta-L-(alpha-aminoadipyl)-L-cysteinyl-D-valine (ACV) to form the azetidinone and thiazolidine rings of isopenicillin. This Streptomyces jumonjinensis protein is Isopenicillin N synthase (pcbC).